A 177-amino-acid chain; its full sequence is Endoribonuclease YbeY (177 aa).

Positions 142, 146, and 152 each coordinate Zn(2+).

This sequence belongs to the endoribonuclease YbeY family. The cofactor is Zn(2+).

It localises to the cytoplasm. Its function is as follows. Single strand-specific metallo-endoribonuclease involved in late-stage 70S ribosome quality control and in maturation of the 3' terminus of the 16S rRNA. In Synechococcus sp. (strain CC9311), this protein is Endoribonuclease YbeY.